Consider the following 198-residue polypeptide: ATP-dependent Clp protease proteolytic subunit (198 aa).

Ser-98 functions as the Nucleophile in the catalytic mechanism. The active site involves His-123.

The protein belongs to the peptidase S14 family. In terms of assembly, fourteen ClpP subunits assemble into 2 heptameric rings which stack back to back to give a disk-like structure with a central cavity, resembling the structure of eukaryotic proteasomes.

The protein resides in the cytoplasm. The enzyme catalyses Hydrolysis of proteins to small peptides in the presence of ATP and magnesium. alpha-casein is the usual test substrate. In the absence of ATP, only oligopeptides shorter than five residues are hydrolyzed (such as succinyl-Leu-Tyr-|-NHMec, and Leu-Tyr-Leu-|-Tyr-Trp, in which cleavage of the -Tyr-|-Leu- and -Tyr-|-Trp bonds also occurs).. In terms of biological role, cleaves peptides in various proteins in a process that requires ATP hydrolysis. Has a chymotrypsin-like activity. Plays a major role in the degradation of misfolded proteins. The polypeptide is ATP-dependent Clp protease proteolytic subunit (Levilactobacillus brevis (strain ATCC 367 / BCRC 12310 / CIP 105137 / JCM 1170 / LMG 11437 / NCIMB 947 / NCTC 947) (Lactobacillus brevis)).